Here is a 190-residue protein sequence, read N- to C-terminus: RNA-binding protein OPG065 (190 aa).

The Z-binding domain occupies 5 to 70 (YIDERSNAEI…DIPPRWFMTT (66 aa)). One can recognise a DRBM domain in the interval 117–184 (NPVTVINEYC…AKLAVDKLLG (68 aa)).

It belongs to the orthopoxvirus OPG065 family. Interacts with host G1P2/ISG15. Interacts with host EIF2AK2/PKR. Interacts with host ZBP1.

Its function is as follows. RNA-binding protein that plays a role in the inhibition of multiple cellular antiviral responses activated by double-stranded RNA (dsRNA), such as inhibition of PKR activation, necroptosis, and IFN-mediated antiviral activities. Recognizes and binds Z-RNA structures via its Z-binding domain and dsRNA via its DRBM domain: RNA-binding activity is required to escape host ZBP1-dependent necroptosis. Mechanistically, the Z-binding domain binds Z-RNAs that are produced during vaccinia virus infection, thereby competing with Z-RNA detection by host ZBP1, suppressing ZBP1-dependent necroptosis. Acts as a key inhibitor of the interferon response by blocking the phosphorylation and subsequent activation of IRF3 and IRF7 kinases that are required for interferon-alpha gene expression. Inhibits NF-kappa-B activation and the ubiquitin-like protein ISG15, which is an early antiviral protein. The binding with host ISG15 subsequently blocks host ISGylation. The polypeptide is RNA-binding protein OPG065 (OPG065) (Vaccinia virus (strain Western Reserve) (VACV)).